Reading from the N-terminus, the 841-residue chain is Rhomboid-like protease 5 (841 aa).

Low complexity predominate over residues 1–10 (MSSKGGSSRL). The interval 1–289 (MSSKGGSSRL…GGDGGPRRHS (289 aa)) is disordered. The span at 11–51 (GSKDLKKMTSRTERELRDSGRVRGEVERVEKRLRATAKVKE) shows a compositional bias: basic and acidic residues. Low complexity predominate over residues 95 to 132 (LRPASSSPRLASSSRPTESTLPSSSSRALQGASSSSSS). Basic and acidic residues-rich tracts occupy residues 154-163 (LRQEKKRLPE), 209-230 (RTAE…RGSV), and 243-275 (SSHE…RSGD). 6 consecutive transmembrane segments (helical) span residues 323–343 (FLMI…ELVL), 464–484 (MFRV…LLNV), 492–512 (WILE…VGGV), 526–546 (VTVG…PFSI), 571–590 (FGNM…GGLI), and 673–693 (FAAA…LLVP). The Nucleophile role is filled by Ser-531. His-585 is a catalytic residue.

This sequence belongs to the peptidase S54 family.

It is found in the membrane. It carries out the reaction Cleaves type-1 transmembrane domains using a catalytic dyad composed of serine and histidine that are contributed by different transmembrane domains.. Its function is as follows. Serine protease involved in intramembrane proteolysis. Cleaves microneme adhesins, such as MIC2. This step is essential for efficient invasion of host cells. Catalyzes intramembrane proteolysis of AMA1. The chain is Rhomboid-like protease 5 (ROM5) from Toxoplasma gondii.